A 347-amino-acid chain; its full sequence is Ribosomal RNA small subunit methyltransferase C (347 aa).

It belongs to the methyltransferase superfamily. RsmC family. In terms of assembly, monomer.

The protein localises to the cytoplasm. The catalysed reaction is guanosine(1207) in 16S rRNA + S-adenosyl-L-methionine = N(2)-methylguanosine(1207) in 16S rRNA + S-adenosyl-L-homocysteine + H(+). Functionally, specifically methylates the guanine in position 1207 of 16S rRNA in the 30S particle. The sequence is that of Ribosomal RNA small subunit methyltransferase C from Shewanella baltica (strain OS185).